Consider the following 211-residue polypeptide: Glycerol-3-phosphate acyltransferase (211 aa).

Transmembrane regions (helical) follow at residues 5–25 (VILG…TGYL), 55–75 (GPGL…ILVA), 85–105 (PVPA…AVLA), 126–146 (VLLA…LVVL), and 168–188 (WFFT…AFVI).

It belongs to the PlsY family. As to quaternary structure, probably interacts with PlsX.

Its subcellular location is the cell inner membrane. It carries out the reaction an acyl phosphate + sn-glycerol 3-phosphate = a 1-acyl-sn-glycero-3-phosphate + phosphate. It participates in lipid metabolism; phospholipid metabolism. Functionally, catalyzes the transfer of an acyl group from acyl-phosphate (acyl-PO(4)) to glycerol-3-phosphate (G3P) to form lysophosphatidic acid (LPA). This enzyme utilizes acyl-phosphate as fatty acyl donor, but not acyl-CoA or acyl-ACP. This Thermosynechococcus vestitus (strain NIES-2133 / IAM M-273 / BP-1) protein is Glycerol-3-phosphate acyltransferase.